The sequence spans 765 residues: MASNNSTSQLAALAAFKAINNKKNEESQPNNRSRIPLKVDTTAPPQTQMKALNSATRAKSSNKISQTQADKTRGQTSERKDQKTTPTGSNMTNIFKMPNTPKTPKISKSAETPNSVGASRRSSTYSNSFAVESLENEPPKNDNFGEPLSTVNNLERRKTVSQHSLNYDPQDMIRNVKNSIGSKYISNDLSPGQVNTKRLSTGTQPKDMLDSVRNSINSKTKTNSKNQEMSQRNALILNGIRDSIDSKRISSHHDNSTISLPLAEERDKILKSISKSNNPEEQLMLYGQPIYNYSSSSFASSFSENDNDQLRTPVIIRTDMDLLDPDSNASIQHDERENYSNEDDDFEYNDTYDTKEDKEVSPINIPLSSHACARLGISNNDTPKTFMNLRIQTPDKEDSSRLKPKRKPPPEMDNDSISPTFTEQSDGYQTEGDDRMSDASSNRTRRHSVQYNDYGGYSDASSKSQIKVNDDSDYSYFDESDLSGSETPSVEKIDNDKSFLDDRLPIFPDIKAKSRKLFRNRKSKPIYNSDDPDTSKSDLQSATEELKNISVPSRTSTPVMGHQSQPVQLKATMRTNKKREKKYSFNENKPWKNHSELSYIAESERKRYEGLWVSNKGLYINCAVSRFIGVDYNGKPEIESQIENQDAPTTAALLSSRTTNEDNSNVVQQNFHNLLSAETSQLIHGVVVKRIWKRSRLPKETLEAIWDLVDFRKDGTLNKPEFLVGMWLVDQCLYGRKLPKKVDGTVWNSLGNVGLNVVLKKKGRR.

Disordered stretches follow at residues 20 to 124 (NNKK…RSST), 187 to 206 (NDLS…TQPK), 321 to 362 (DLLD…EVSP), and 390 to 466 (RIQT…KSQI). The segment covering 43-69 (APPQTQMKALNSATRAKSSNKISQTQA) has biased composition (polar residues). Residues 70–83 (DKTRGQTSERKDQK) show a composition bias toward basic and acidic residues. Polar residues-rich tracts occupy residues 84-93 (TTPTGSNMTN), 109-124 (SAET…RSST), and 187-204 (NDLS…TGTQ). The span at 340-350 (SNEDDDFEYND) shows a compositional bias: acidic residues. Residues 415–428 (DSISPTFTEQSDGY) show a composition bias toward polar residues. One can recognise an EH domain in the interval 663–753 (NSNVVQQNFH…GTVWNSLGNV (91 aa)). Positions 697-732 (LPKETLEAIWDLVDFRKDGTLNKPEFLVGMWLVDQC) constitute an EF-hand domain.

It belongs to the IRS4 family.

Positive regulator of phosphatidylinositol 4,5-bisphosphate turnover and negatively regulates signaling through the cell integrity pathway. Involved in rDNA silencing. The chain is Increased rDNA silencing protein 4 (IRS4) from Debaryomyces hansenii (strain ATCC 36239 / CBS 767 / BCRC 21394 / JCM 1990 / NBRC 0083 / IGC 2968) (Yeast).